The following is a 364-amino-acid chain: GDSL esterase/lipase At1g29660 (364 aa).

Positions 1 to 26 (MESYLRKWCLVSVWVLLLGLGFKVKA) are cleaved as a signal peptide. S39 (nucleophile) is an active-site residue. Residues D328 and H331 each act as charge relay system in the active site.

It belongs to the 'GDSL' lipolytic enzyme family. Found in phloem exudates.

It is found in the secreted. The protein localises to the extracellular space. The protein resides in the apoplast. Involved in EDS1-dependent systemic acquired resistance, maybe in phloem-mediated long-distance signaling. This is GDSL esterase/lipase At1g29660 from Arabidopsis thaliana (Mouse-ear cress).